A 1059-amino-acid chain; its full sequence is Endo-1,4-beta-xylanase A (1059 aa).

An N-terminal signal peptide occupies residues 1 to 30; sequence MQVRKRRGLLDVSTAVLVGILAGFLGVVLA. The A-1 stretch occupies residues 47–199; it reads SSLETVLALS…LDKVQVLAPK (153 aa). Residues 200–354 form an A-2 region; sequence ESGPKVIYET…DDVKIVDTTS (155 aa). One can recognise a GH10 domain in the interval 364-692; that stretch reads EKEIPALKEV…KLAYWAIVAP (329 aa). E502 functions as the Proton donor in the catalytic mechanism. The active-site Nucleophile is E608. 2 consecutive CBM-cenC domains span residues 700-870 and 871-1059; these read KESR…LEGI and MVAT…RLIK.

The protein belongs to the glycosyl hydrolase 10 (cellulase F) family.

The catalysed reaction is Endohydrolysis of (1-&gt;4)-beta-D-xylosidic linkages in xylans.. In Thermotoga maritima (strain ATCC 43589 / DSM 3109 / JCM 10099 / NBRC 100826 / MSB8), this protein is Endo-1,4-beta-xylanase A (xynA).